We begin with the raw amino-acid sequence, 87 residues long: Type 3 secretion system needle filament protein (87 aa).

This sequence belongs to the SctF family. As to quaternary structure, the core secretion machinery of the T3SS is composed of approximately 20 different proteins, including cytoplasmic components, a base, an export apparatus and a needle. This subunit polymerizes and forms the helical needle filament. In Y.enterocolitica E40, the needles are composed of 139 (plus-minus 19) YscF/SctF subunits.

The protein localises to the secreted. It localises to the cell surface. The secretion and/or polymerization may be controlled by the type III secretion system regulator YopR. In terms of biological role, component of the type III secretion system (T3SS), also called injectisome, which is used to inject bacterial effector proteins into eukaryotic host cells. YscF/SctF forms the external needle filament that protrudes from the bacterial surface. The needle is not sufficient by itself for the formation of a pore allowing translocation of the Yop effectors across the host cell membrane. This chain is Type 3 secretion system needle filament protein, found in Yersinia enterocolitica.